A 542-amino-acid chain; its full sequence is Serine/threonine-protein phosphatase 2A regulatory subunit pptr-1 (542 aa).

2 disordered regions span residues 1-28 (MHGS…TGGQ) and 500-542 (DYLK…PAKK). Over residues 528-542 (KKSSTGSETTTPAKK) the composition is skewed to polar residues.

It belongs to the phosphatase 2A regulatory subunit B56 family. As to quaternary structure, part of a complex consisting of a common heterodimeric core enzyme, composed of catalytic subunit let-92 and constant regulatory subunit paa-1, that associates with a variety of regulatory subunits which confer distinct properties to the holoenzyme. Interacts with akt-1 but not akt-2. Interacts with sgk-1. Interacts with P granule components meg-1, meg-3 and meg-4. As to expression, expressed in pharynx, vulva and spermatheca.

Its subcellular location is the cytoplasm. Probable regulatory subunit of serine/threonine-protein phosphatase let-92 which negatively regulates the insulin receptor signaling cascade composed of daf-2, age-1, akt-1, akt-2 and sgk-1 by promoting the dephosphorylation of akt-1 on 'Thr-350'. Negatively regulates several functions controlled by the insulin pathway including dauer formation, lifespan, fat storage and stress resistance. Plays a role in the asymmetric segregation of the P granule components during embryonic cell divisions but does not play an essential role in specifying germ cell fate. Within a PP2A phosphatase complex, acts redundantly with pptr-2, to dephosphorylate P granule components including meg-1 and meg-3 to promote the assembly and accumulation of zygotic P granules in the posterior cytoplasm during zygote polarization, and thus maintain P granule distribution and segregation in early stage embryos following meiosis. In adults, required to promote germ cell proliferation and differentiation when exposed to thermic stress. This chain is Serine/threonine-protein phosphatase 2A regulatory subunit pptr-1, found in Caenorhabditis elegans.